The chain runs to 303 residues: Hemolysin E (303 aa).

A disulfide bond links C87 and C285. Residues 179–199 form a helical membrane-spanning segment; sequence AGAAAGIVAGPFGLIISYSIA.

It belongs to the hemolysin E family. As to quaternary structure, monomer and oligomer. In periplasm, it is present as a monomer, while in outer membrane vesicles, it oligomerizes to form a pore structure that is active. The pore is formed by a dodecamer. In periplasm, it forms a disulfide bond, which prevents the oligomerization. In outer membrane vesicles, the redox status prevents formation of the disulfide bond, leading to oligomerization and pore formation.

It is found in the secreted. Its subcellular location is the periplasm. The protein localises to the host cell membrane. Functionally, toxin, which has some hemolytic activity towards mammalian cells. Acts by forming a pore-like structure upon contact with mammalian cells. This chain is Hemolysin E (hlyE), found in Salmonella typhi.